The chain runs to 277 residues: Hydroxyethylthiazole kinase (277 aa).

M56 serves as a coordination point for substrate. ATP contacts are provided by R131 and T177. Residue A204 coordinates substrate.

Belongs to the Thz kinase family. It depends on Mg(2+) as a cofactor.

It carries out the reaction 5-(2-hydroxyethyl)-4-methylthiazole + ATP = 4-methyl-5-(2-phosphooxyethyl)-thiazole + ADP + H(+). It participates in cofactor biosynthesis; thiamine diphosphate biosynthesis; 4-methyl-5-(2-phosphoethyl)-thiazole from 5-(2-hydroxyethyl)-4-methylthiazole: step 1/1. Functionally, catalyzes the phosphorylation of the hydroxyl group of 4-methyl-5-beta-hydroxyethylthiazole (THZ). In Gemmatimonas aurantiaca (strain DSM 14586 / JCM 11422 / NBRC 100505 / T-27), this protein is Hydroxyethylthiazole kinase.